Consider the following 1460-residue polypeptide: DNA-binding protein RFX7 (1460 aa).

Residues 1-34 (MAEEQQQPPPQQPDAHQQLPPSAPNSGVALPALV) form a disordered region. The RFX-type winged-helix DNA-binding region spans 108 to 183 (AFSWIRNTLE…YCYSGLRKKA (76 aa)). The short motif at 188–193 (PTLPNL) is the PxLPxI/L motif; mediates interaction with ANKRA2 and RFXANK element. Positions 308–352 (QRKIQKKQQEQKLQSPLPGESAAKKSESATSNGVTNLPNGNPSIL) are disordered. Ser-322 is subject to Phosphoserine. The span at 337–352 (TSNGVTNLPNGNPSIL) shows a compositional bias: polar residues. Residue Ser-379 is modified to Phosphoserine. Residues 404–416 (SVKQAPKTPQNVP) show a composition bias toward polar residues. The disordered stretch occupies residues 404 to 428 (SVKQAPKTPQNVPASPGGDRSARHR). Phosphoserine occurs at positions 418 and 455. The segment covering 481–513 (TPSNSNTPLKHSASVSSATGTTEESRSVPQIKN) has biased composition (polar residues). Disordered regions lie at residues 481–585 (TPSN…PSNE), 632–715 (TFTS…AQIP), and 917–1015 (QSVT…SVPP). Over residues 515–535 (SVVSLQSPGSRSSSAGGTSAV) the composition is skewed to low complexity. Over residues 537–549 (VKVEPETSSDEHP) the composition is skewed to basic and acidic residues. 2 stretches are compositionally biased toward polar residues: residues 563–583 (QTPS…QKPS) and 632–644 (TFTS…NGDS). A Phosphothreonine modification is found at Thr-564. At Ser-662 the chain carries Phosphoserine. Lys-704 is subject to N6-acetyllysine. Composition is skewed to polar residues over residues 705-715 (TEGSTAGAQIP) and 917-933 (QSVT…SSTH). The span at 947-963 (TPTPTPTPTPTPTPTPT) shows a compositional bias: pro residues. A compositionally biased stretch (polar residues) spans 971–1009 (GSQSLSRESPCSRLAQTTPVDSALGSSRHTPIGTPHSNC). A Phosphothreonine modification is found at Thr-988. Phosphoserine occurs at positions 1178 and 1329.

Belongs to the RFX family. Interacts (via PxLPxI/L motif) with RFXANK (via ankyrin repeats). Interacts (via PxLPxI/L motif) with ANKRA2 (via ankyrin repeats). As to expression, widely expressed in many different tissue types including thymus and placenta, with high expression in brain. Expressed in both inhibitory and excitatory neurons in cortex.

The protein localises to the nucleus. Functionally, transcription factor. Acts as a transcriptional activator by binding to promoter regions of target genes, such as PDCD4, PIK3IP1, MXD4, PNRC1, and RFX5. Plays a role in natural killer (NK) cell maintenance and immunity. May play a role in the process of ciliogenesis in the neural tube and neural tube closure. This is DNA-binding protein RFX7 from Homo sapiens (Human).